A 417-amino-acid chain; its full sequence is Odorant receptor 65a (417 aa).

Over 1–62 (MTELRSERKN…MNSEQRRLPR (62 aa)) the chain is Cytoplasmic. The helical transmembrane segment at 63 to 83 (IVAWQYFVSIQLATALASLFY) threads the bilayer. The Extracellular segment spans residues 84-98 (GISESIGDIVNLGRD). A helical membrane pass occupies residues 99–119 (LVFIITIIFICFRLVFFAQYA). Topologically, residues 120–152 (GELDVIIDALEDIYHWSIKGPATKEVQETKRLH) are cytoplasmic. Residues 153 to 173 (FLLFMALIITWFSFLILFMLI) traverse the membrane as a helical segment. At 174-206 (KISTPFWIESQTLPFHVSWPFQLHDPSKHPIAY) the chain is on the extracellular side. A helical transmembrane segment spans residues 207–227 (IIIFVSQSTTMLYFLIWLGVV). Topologically, residues 228 to 290 (ENMGVSLFFE…TDRCNHIFNG (63 aa)) are cytoplasmic. Residues 291 to 311 (AFIMQMLINFLLVSLSLFEVL) traverse the membrane as a helical segment. Residues 312 to 316 (AAKKN) lie on the Extracellular side of the membrane. A helical membrane pass occupies residues 317–337 (PQVAVEYMIIMLMTLGHLSFW). Topologically, residues 338–393 (SKFGDMFSKESEQVALAVYEAYDPNVGSKSIHRQFCFFIQRAQKPLIMKASPFPPF) are cytoplasmic. The chain crosses the membrane as a helical span at residues 394–414 (NLENYMFILKQCYSILTILAN). At 415 to 417 (TLE) the chain is on the extracellular side.

This sequence belongs to the insect chemoreceptor superfamily. Heteromeric odorant receptor channel (TC 1.A.69) family. Or49a subfamily. Interacts with Orco. Complexes exist early in the endomembrane system in olfactory sensory neurons (OSNs), coupling these complexes to the conserved ciliary trafficking pathway. Expressed in olfactory sensory neurons in the antenna.

Its subcellular location is the cell membrane. Its function is as follows. Odorant receptor which mediates acceptance or avoidance behavior, depending on its substrates. The odorant receptor repertoire encodes a large collection of odor stimuli that vary widely in identity, intensity, and duration. May form a complex with Orco to form odorant-sensing units, providing sensitive and prolonged odorant signaling and calcium permeability. Involved in olfactory communication for modulating aggression through the sensing of the male-specific pheromone 11-cis-vaccenyl acetate (cVA). Although acute exposure to cVA elicites aggression through Or67d olfactory receptor neurons (ORNs), chronic cVA exposure reduces aggression through Or65a ORNs. Moreover, cVA leads to generalized learning with mated females. It is a major component of the male cuticular hydrocarbon profile, but it is not found on virgin females. During copulation, cVA is transferred to the female in ejaculate along with sperm and peptides that decrease her sexual receptivity. This Drosophila melanogaster (Fruit fly) protein is Odorant receptor 65a (Or65a).